The chain runs to 153 residues: Pheromone-binding protein Gp-9 (153 aa).

The N-terminal stretch at 1–19 (MKTFVLHIFIFALVAFASA) is a signal peptide. 3 disulfides stabilise this stretch: Cys-37/Cys-77, Cys-73/Cys-129, and Cys-118/Cys-138.

Belongs to the PBP/GOBP family. Homodimer.

The protein localises to the secreted. Its function is as follows. Colony queen number, a major feature of social organization, is associated with worker genotype for Gp-9. Colonies are headed by either a single reproductive queen (monogyne form) or multiple queens (polygyne form). Differences in worker Gp-9 genotypes between social forms may cause differences in workers' abilities to recognize queens and regulate their numbers. The polypeptide is Pheromone-binding protein Gp-9 (Solenopsis tridens (Fire ant)).